We begin with the raw amino-acid sequence, 149 residues long: Protein SprT-like (149 aa).

The SprT-like domain maps to 6–147 (LQALVEQISI…VCGRCRSKLK (142 aa)). Residue His67 participates in Zn(2+) binding. Glu68 is a catalytic residue. Position 71 (His71) interacts with Zn(2+).

Belongs to the SprT family. Zn(2+) is required as a cofactor.

It is found in the cytoplasm. This chain is Protein SprT-like, found in Geobacillus kaustophilus (strain HTA426).